The primary structure comprises 344 residues: Heat-inducible transcription repressor hrcA (344 aa).

It belongs to the HrcA family.

Negative regulator of class I heat shock genes (grpE-dnaK-dnaJ and groELS operons). Prevents heat-shock induction of these operons. The chain is Heat-inducible transcription repressor hrcA from Streptococcus pyogenes serotype M3 (strain ATCC BAA-595 / MGAS315).